Here is a 300-residue protein sequence, read N- to C-terminus: Phosphoribosylaminoimidazole-succinocarboxamide synthase (300 aa).

The protein belongs to the SAICAR synthetase family.

It carries out the reaction 5-amino-1-(5-phospho-D-ribosyl)imidazole-4-carboxylate + L-aspartate + ATP = (2S)-2-[5-amino-1-(5-phospho-beta-D-ribosyl)imidazole-4-carboxamido]succinate + ADP + phosphate + 2 H(+). It functions in the pathway purine metabolism; IMP biosynthesis via de novo pathway; 5-amino-1-(5-phospho-D-ribosyl)imidazole-4-carboxamide from 5-amino-1-(5-phospho-D-ribosyl)imidazole-4-carboxylate: step 1/2. The protein is Phosphoribosylaminoimidazole-succinocarboxamide synthase of Methylibium petroleiphilum (strain ATCC BAA-1232 / LMG 22953 / PM1).